The primary structure comprises 267 residues: Ribosomal RNA small subunit methyltransferase A (267 aa).

Residues asparagine 16, leucine 18, glycine 43, glutamate 64, aspartate 88, and asparagine 109 each contribute to the S-adenosyl-L-methionine site.

The protein belongs to the class I-like SAM-binding methyltransferase superfamily. rRNA adenine N(6)-methyltransferase family. RsmA subfamily.

It localises to the cytoplasm. The catalysed reaction is adenosine(1518)/adenosine(1519) in 16S rRNA + 4 S-adenosyl-L-methionine = N(6)-dimethyladenosine(1518)/N(6)-dimethyladenosine(1519) in 16S rRNA + 4 S-adenosyl-L-homocysteine + 4 H(+). Functionally, specifically dimethylates two adjacent adenosines (A1518 and A1519) in the loop of a conserved hairpin near the 3'-end of 16S rRNA in the 30S particle. May play a critical role in biogenesis of 30S subunits. The sequence is that of Ribosomal RNA small subunit methyltransferase A from Acidithiobacillus ferrooxidans (strain ATCC 23270 / DSM 14882 / CIP 104768 / NCIMB 8455) (Ferrobacillus ferrooxidans (strain ATCC 23270)).